The following is a 473-amino-acid chain: Photosystem II CP43 reaction center protein (473 aa).

The propeptide occupies Met1–Glu14. Thr15 carries the N-acetylthreonine modification. Thr15 is modified (phosphothreonine). A run of 5 helical transmembrane segments spans residues Leu69–Ala93, Leu134–Asn155, Lys178–Thr200, Lys255–Ser275, and Trp291–Ala312. Residue Glu367 coordinates [CaMn4O5] cluster. A helical transmembrane segment spans residues Arg447–Pro471.

It belongs to the PsbB/PsbC family. PsbC subfamily. PSII is composed of 1 copy each of membrane proteins PsbA, PsbB, PsbC, PsbD, PsbE, PsbF, PsbH, PsbI, PsbJ, PsbK, PsbL, PsbM, PsbT, PsbX, PsbY, PsbZ, Psb30/Ycf12, at least 3 peripheral proteins of the oxygen-evolving complex and a large number of cofactors. It forms dimeric complexes. The cofactor is Binds multiple chlorophylls and provides some of the ligands for the Ca-4Mn-5O cluster of the oxygen-evolving complex. It may also provide a ligand for a Cl- that is required for oxygen evolution. PSII binds additional chlorophylls, carotenoids and specific lipids..

The protein localises to the plastid. It is found in the chloroplast thylakoid membrane. Its function is as follows. One of the components of the core complex of photosystem II (PSII). It binds chlorophyll and helps catalyze the primary light-induced photochemical processes of PSII. PSII is a light-driven water:plastoquinone oxidoreductase, using light energy to abstract electrons from H(2)O, generating O(2) and a proton gradient subsequently used for ATP formation. In Cucumis sativus (Cucumber), this protein is Photosystem II CP43 reaction center protein.